Reading from the N-terminus, the 208-residue chain is Uracil phosphoribosyltransferase (208 aa).

5-phospho-alpha-D-ribose 1-diphosphate is bound by residues Arg78, Arg103, and 130-138; that span reads DPMLATGGS. Uracil-binding positions include Ile193 and 198–200; that span reads GDA. A 5-phospho-alpha-D-ribose 1-diphosphate-binding site is contributed by Asp199.

Belongs to the UPRTase family. Requires Mg(2+) as cofactor.

The catalysed reaction is UMP + diphosphate = 5-phospho-alpha-D-ribose 1-diphosphate + uracil. Its pathway is pyrimidine metabolism; UMP biosynthesis via salvage pathway; UMP from uracil: step 1/1. Its activity is regulated as follows. Allosterically activated by GTP. Functionally, catalyzes the conversion of uracil and 5-phospho-alpha-D-ribose 1-diphosphate (PRPP) to UMP and diphosphate. The polypeptide is Uracil phosphoribosyltransferase (Haemophilus influenzae (strain 86-028NP)).